Here is a 315-residue protein sequence, read N- to C-terminus: Mannose-6-phosphate isomerase ManA (315 aa).

Zn(2+) contacts are provided by His97, Glu115, and His172. The active site involves Arg192.

This sequence belongs to the mannose-6-phosphate isomerase type 1 family. Requires Zn(2+) as cofactor.

It catalyses the reaction D-mannose 6-phosphate = D-fructose 6-phosphate. The polypeptide is Mannose-6-phosphate isomerase ManA (manA) (Bacillus subtilis (strain 168)).